Here is a 310-residue protein sequence, read N- to C-terminus: Ribonuclease HIII (310 aa).

The RNase H type-2 domain occupies 90-306 (FQCIGSDEAG…RKKAENLVQK (217 aa)). A divalent metal cation-binding residues include Asp96, Glu97, and Asp201.

This sequence belongs to the RNase HII family. RnhC subfamily. Mn(2+) serves as cofactor. It depends on Mg(2+) as a cofactor.

It localises to the cytoplasm. It catalyses the reaction Endonucleolytic cleavage to 5'-phosphomonoester.. Its function is as follows. Endonuclease that specifically degrades the RNA of RNA-DNA hybrids. This chain is Ribonuclease HIII, found in Staphylococcus saprophyticus subsp. saprophyticus (strain ATCC 15305 / DSM 20229 / NCIMB 8711 / NCTC 7292 / S-41).